Reading from the N-terminus, the 166-residue chain is Protein-export protein SecB (166 aa).

Belongs to the SecB family. In terms of assembly, homotetramer, a dimer of dimers. One homotetramer interacts with 1 SecA dimer.

It localises to the cytoplasm. In terms of biological role, one of the proteins required for the normal export of preproteins out of the cell cytoplasm. It is a molecular chaperone that binds to a subset of precursor proteins, maintaining them in a translocation-competent state. It also specifically binds to its receptor SecA. The chain is Protein-export protein SecB from Cereibacter sphaeroides (strain ATCC 17025 / ATH 2.4.3) (Rhodobacter sphaeroides).